Consider the following 200-residue polypeptide: Recoverin (200 aa).

Glycine 2 carries N-myristoyl glycine lipidation. 4 consecutive EF-hand domains span residues 25–60 (EEEL…FPDT), 61–96 (DPKA…TTAG), 97–132 (KTNQ…IFKM), and 147–182 (TPEK…NKEI). Cysteine 39 is modified (cysteine sulfenic acid (-SOH)). 10 residues coordinate Ca(2+): aspartate 74, asparagine 76, aspartate 78, threonine 80, glutamate 85, aspartate 110, aspartate 112, asparagine 114, threonine 116, and glutamate 121. The interval 189–192 (EPQK) is interaction with GRK1.

Belongs to the recoverin family. In terms of assembly, homodimer; disulfide-linked. Homodimerization is caused by prolonged intense illumination. May form a complex composed of RHO, GRK1 and RCVRN in a Ca(2+)-dependent manner; RCVRN prevents the interaction between GRK1 and RHO. Interacts (via C-terminus) with GRK1 (via N-terminus); the interaction is Ca(2+)-dependent. The N-terminal glycine is linked to one of four different types of acyl groups. The most abundant is myristoleate (14:1), but 14:0, 14:2, and 12:0 acyl residues are also present. The Ca(2+) induced exposure of the myristoyl group, known as the calcium-myristoyl switch, promotes RCVRN binding to the photoreceptor cell membranes only when intracellular Ca(2+) concentration is high. In terms of processing, oxidation on Cys-39 occurs in response to prolonged intense illumination and results in the formation of disulfide homodimers, and to a lesser extent disulfide-linked heterodimers. As to expression, retina and pineal gland.

The protein resides in the photoreceptor inner segment. The protein localises to the cell projection. Its subcellular location is the cilium. It localises to the photoreceptor outer segment. It is found in the photoreceptor outer segment membrane. The protein resides in the perikaryon. In terms of biological role, acts as a calcium sensor and regulates phototransduction of cone and rod photoreceptor cells. Modulates light sensitivity of cone photoreceptor in dark and dim conditions. In response to high Ca(2+) levels induced by low light levels, prolongs RHO/rhodopsin activation in rod photoreceptor cells by binding to and inhibiting GRK1-mediated phosphorylation of RHO/rhodopsin. Plays a role in scotopic vision/enhances vision in dim light by enhancing signal transfer between rod photoreceptors and rod bipolar cells. Improves rod photoreceptor sensitivity in dim light and mediates response of rod photoreceptors to facilitate detection of change and motion in bright light. This is Recoverin (RCVRN) from Homo sapiens (Human).